The sequence spans 84 residues: Exodeoxyribonuclease 7 small subunit (84 aa).

It belongs to the XseB family. As to quaternary structure, heterooligomer composed of large and small subunits.

It is found in the cytoplasm. The enzyme catalyses Exonucleolytic cleavage in either 5'- to 3'- or 3'- to 5'-direction to yield nucleoside 5'-phosphates.. In terms of biological role, bidirectionally degrades single-stranded DNA into large acid-insoluble oligonucleotides, which are then degraded further into small acid-soluble oligonucleotides. This Haemophilus influenzae (strain ATCC 51907 / DSM 11121 / KW20 / Rd) protein is Exodeoxyribonuclease 7 small subunit.